A 140-amino-acid chain; its full sequence is Large ribosomal subunit protein uL13 (140 aa).

The protein belongs to the universal ribosomal protein uL13 family. In terms of assembly, part of the 50S ribosomal subunit.

In terms of biological role, this protein is one of the early assembly proteins of the 50S ribosomal subunit, although it is not seen to bind rRNA by itself. It is important during the early stages of 50S assembly. The polypeptide is Large ribosomal subunit protein uL13 (Methanosarcina barkeri (strain Fusaro / DSM 804)).